We begin with the raw amino-acid sequence, 405 residues long: uncharacterized protein (405 aa).

13 helical membrane-spanning segments follow: residues I19–V39, M48–L68, I85–I105, A106–I126, S129–G149, G156–W176, G178–L198, G224–F244, G252–P272, V283–M303, I309–A329, T344–M364, and W366–L386.

Belongs to the major facilitator superfamily. YhhS family.

It is found in the cell inner membrane. This is an uncharacterized protein from Salmonella paratyphi C (strain RKS4594).